Consider the following 185-residue polypeptide: Large ribosomal subunit protein uL22 (185 aa).

This sequence belongs to the universal ribosomal protein uL22 family. As to quaternary structure, part of the 50S ribosomal subunit.

This protein binds specifically to 23S rRNA. It makes multiple contacts with different domains of the 23S rRNA in the assembled 50S subunit and ribosome. Functionally, the globular domain of the protein is located near the polypeptide exit tunnel on the outside of the subunit, while an extended beta-hairpin is found that lines the wall of the exit tunnel in the center of the 70S ribosome. In Pyrobaculum islandicum (strain DSM 4184 / JCM 9189 / GEO3), this protein is Large ribosomal subunit protein uL22.